The chain runs to 829 residues: Colorectal mutant cancer protein (829 aa).

Disordered stretches follow at residues 114 to 139, 282 to 320, and 672 to 700; these read RSEL…TSVS, TRLQ…SSND, and EEQK…CADA. The segment covering 123–132 has biased composition (basic and acidic residues); that stretch reads EVNEDSRSMD. The span at 285 to 312 shows a compositional bias: polar residues; it reads QSVQATGPSSPGRLTSTNRPINPSTGEL. Basic and acidic residues predominate over residues 689-698; the sequence is SKDKPGKECA. Residues 766 to 782 carry the Nuclear localization signal motif; it reads KRANSNLVAAYEKAKKK. The PDZ-binding signature appears at 826 to 829; sequence ETSL. The residue at position 828 (Ser-828) is a Phosphoserine.

It belongs to the MCC family. As to quaternary structure, interacts with SCRIB (via phosphorylated PDZ-binding motif), EZR, SNX27, NHERF1 and NHERF2. Interacts with CTNNB1; the interaction is enhanced upon Wnt stimulation. Interacts with MYH10. Interacts with CCAR2. In terms of tissue distribution, expressed in a variety of tissues.

It localises to the cell membrane. It is found in the cell projection. The protein localises to the lamellipodium. Its subcellular location is the nucleus. The protein resides in the cytoplasm. Functionally, candidate for the putative colorectal tumor suppressor gene located at 5q21. Suppresses cell proliferation and the Wnt/b-catenin pathway in colorectal cancer cells. Inhibits DNA binding of b-catenin/TCF/LEF transcription factors. Involved in cell migration independently of RAC1, CDC42 and p21-activated kinase (PAK) activation. Represses the beta-catenin pathway (canonical Wnt signaling pathway) in a CCAR2-dependent manner by sequestering CCAR2 to the cytoplasm, thereby impairing its ability to inhibit SIRT1 which is involved in the deacetylation and negative regulation of beta-catenin (CTNB1) transcriptional activity. The sequence is that of Colorectal mutant cancer protein (MCC) from Homo sapiens (Human).